The sequence spans 205 residues: Thymidylate kinase (205 aa).

11-18 (GPEGSGKT) lines the ATP pocket.

This sequence belongs to the thymidylate kinase family.

The enzyme catalyses dTMP + ATP = dTDP + ADP. Functionally, phosphorylation of dTMP to form dTDP in both de novo and salvage pathways of dTTP synthesis. The protein is Thymidylate kinase of Clostridium novyi (strain NT).